We begin with the raw amino-acid sequence, 130 residues long: Small ribosomal subunit protein uS8 (130 aa).

The protein belongs to the universal ribosomal protein uS8 family. In terms of assembly, part of the 30S ribosomal subunit. Contacts proteins S5 and S12.

Functionally, one of the primary rRNA binding proteins, it binds directly to 16S rRNA central domain where it helps coordinate assembly of the platform of the 30S subunit. The polypeptide is Small ribosomal subunit protein uS8 (Photobacterium profundum (strain SS9)).